The primary structure comprises 470 residues: GTPase Der (470 aa).

2 consecutive EngA-type G domains span residues 2 to 165 and 201 to 372; these read KTIA…GLEA and IRVG…ENFS. GTP contacts are provided by residues 8 to 15, 55 to 59, 117 to 120, 207 to 214, 254 to 258, and 318 to 321; these read GKPNVGKS, DTGGI, NKID, GKVNVGKS, DTAGI, and NKWD. In terms of domain architecture, KH-like spans 373-457; sequence RRIPTSILNK…PILIRARKRG (85 aa).

This sequence belongs to the TRAFAC class TrmE-Era-EngA-EngB-Septin-like GTPase superfamily. EngA (Der) GTPase family. As to quaternary structure, associates with the 50S ribosomal subunit.

In terms of biological role, GTPase that plays an essential role in the late steps of ribosome biogenesis. The protein is GTPase Der of Wolinella succinogenes (strain ATCC 29543 / DSM 1740 / CCUG 13145 / JCM 31913 / LMG 7466 / NCTC 11488 / FDC 602W) (Vibrio succinogenes).